An 82-amino-acid polypeptide reads, in one-letter code: uncharacterized protein (82 aa).

2 helical membrane passes run P32–L52 and S59–I79.

It is found in the cell membrane. This is an uncharacterized protein from Rickettsia prowazekii (strain Madrid E).